The following is a 227-amino-acid chain: tRNA (guanine-N(1)-)-methyltransferase (227 aa).

Residues G110 and 129–134 (IGDYVL) contribute to the S-adenosyl-L-methionine site.

This sequence belongs to the RNA methyltransferase TrmD family. Homodimer.

The protein localises to the cytoplasm. It carries out the reaction guanosine(37) in tRNA + S-adenosyl-L-methionine = N(1)-methylguanosine(37) in tRNA + S-adenosyl-L-homocysteine + H(+). In terms of biological role, specifically methylates guanosine-37 in various tRNAs. This is tRNA (guanine-N(1)-)-methyltransferase from Mycoplasmopsis synoviae (strain 53) (Mycoplasma synoviae).